The following is a 238-amino-acid chain: Keratin-associated protein 5-3 (238 aa).

Tandem repeats lie at residues 35-38 (CCVP), 41-44 (CCKP), 47-50 (CCVP), 91-94 (CCVP), 150-153 (CCKP), 160-163 (CCKP), 170-173 (CCKP), 189-192 (CCKP), 199-202 (CCKP), 218-221 (CCKP), and 228-231 (CCVP). Residues 35 to 231 (CCVPVCCCKP…CSSQSSCCVP (197 aa)) are 11 X 4 AA repeats of C-C-X-P.

The protein belongs to the KRTAP type 5 family. Interacts with hair keratins. Restricted to hair root, not detected in any other tissues.

Its function is as follows. In the hair cortex, hair keratin intermediate filaments are embedded in an interfilamentous matrix, consisting of hair keratin-associated protein (KRTAP), which are essential for the formation of a rigid and resistant hair shaft through their extensive disulfide bond cross-linking with abundant cysteine residues of hair keratins. The matrix proteins include the high-sulfur and high-glycine-tyrosine keratins. The chain is Keratin-associated protein 5-3 (KRTAP5-3) from Homo sapiens (Human).